The sequence spans 327 residues: Movement protein (327 aa).

Residues 297-327 adopt a coiled-coil conformation; sequence SASSSNTENELARVSQNIDLLKNKLKEICGE.

The protein belongs to the caulimoviridae movement protein family. In terms of assembly, homotrimer, through the coiled-coil domain. Interacts with VAP. May interact (via N-terminus) with host prenylated Rab acceptor protein 1D (PRA1D).

The protein localises to the host cell junction. Its subcellular location is the host plasmodesma. Its function is as follows. Transports viral genome to neighboring plant cells directly through plasmosdesmata, without any budding. The movement protein allows efficient cell to cell propagation, by bypassing the host cell wall barrier. Acts by forming tubules structures that increase the size exclusion limit (SEL) of plasmodesmata, thereby allowing viral ribonucleocapsids to spread directly to neighboring cells. This chain is Movement protein, found in Arabidopsis thaliana (Mouse-ear cress).